We begin with the raw amino-acid sequence, 2326 residues long: Probable voltage-dependent N-type calcium channel subunit alpha-1B (2326 aa).

Topologically, residues 1-83 (MARLGNDVPA…DNIIRKYAKR (83 aa)) are cytoplasmic. The disordered stretch occupies residues 17 to 37 (AGGGRGANRHAGPQAGQRGMY). One copy of the I repeat lies at 75–351 (NIIRKYAKRI…LVLGVLSGEF (277 aa)). The helical transmembrane segment at 84-107 (ITEWPPFEYMILATIIANCIVLAL) threads the bilayer. Residues 108–124 (EQHLPDGDKTPMSERLD) lie on the Extracellular side of the membrane. A helical transmembrane segment spans residues 125 to 145 (DTEPYFIGIFCFEAGIKIIAL). Residues 146–156 (GFAFHKGSYLR) lie on the Cytoplasmic side of the membrane. Residues 157-175 (NGWNVMDFVVVLTGILTTI) traverse the membrane as a helical segment. The Extracellular segment spans residues 176–180 (GTDFD). The chain crosses the membrane as a helical span at residues 181–204 (LRTLRAVRVLRPLKLVSGIPSLQV). Over 205-214 (VLKSIMKAMV) the chain is Cytoplasmic. Residues 215 to 237 (PLLQIGLLLFFAILMFAIIGLEF) traverse the membrane as a helical segment. Residues 238 to 323 (YMGKFHKTCF…TANDALGNTW (86 aa)) lie on the Extracellular side of the membrane. The N-linked (GlcNAc...) asparagine glycan is linked to Asn-271. Residues 324 to 348 (NWLYFIPLIVIGSFFMLNLVLGVLS) form a helical membrane-spanning segment. Residues 349-472 (GEFAKERERV…FFIRRMVKSQ (124 aa)) are Cytoplasmic-facing. Residues 371 to 388 (QQVEQEFNRYLRWIHIAE) form a binding to the beta subunit region. The II repeat unit spans residues 458–702 (EKRFRFFIRR…VFLAIAVDNL (245 aa)). Residues 473–491 (SFYWIVLCLVGLNTLCVAI) form a helical membrane-spanning segment. The Extracellular portion of the chain corresponds to 492–501 (VHYDQPPLLT). Residues 502 to 524 (DALYFAEFVFLGLFLTEMSLKMY) traverse the membrane as a helical segment. The Cytoplasmic segment spans residues 525 to 534 (GLGPRNYFHS). Residue Ser-534 coordinates a 1,2-diacyl-sn-glycero-3-phospho-(1D-myo-inositol-4,5-bisphosphate). The helical transmembrane segment at 535-556 (SFNCFDFGVIVGSIFEVVWTAV) threads the bilayer. At 557–563 (KPDTSFG) the chain is on the extracellular side. A helical membrane pass occupies residues 564 to 576 (ISVLRALRLLRIF). Arg-574 and Lys-577 together coordinate a 1,2-diacyl-sn-glycero-3-phospho-(1D-myo-inositol-4,5-bisphosphate). Residues 577–594 (KVTKYWNSLRNLVVSLLN) lie on the Cytoplasmic side of the membrane. The helical transmembrane segment at 595–620 (SMKSIISLLFLLFLFIVVFALLGMQL) threads the bilayer. Topologically, residues 621-672 (FGGQFNFEDGTPPTNFDTFPAAILTVFQILTGEDWNEVMYYGIEAHGGVKKG) are extracellular. Residues 673–699 (MFSSVYFIILTLFGNYTLLNVFLAIAV) traverse the membrane as a helical segment. Topologically, residues 700-1148 (DNLANAQELT…ACHYIVNLRY (449 aa)) are cytoplasmic. Residues 793–1048 (SHQIRPDMKT…LQHLPQQPED (256 aa)) form a disordered region. Composition is skewed to basic and acidic residues over residues 796–808 (IRPD…DRPL), 854–879 (KLGE…DDKR), 886–908 (SKET…SHEG), 935–979 (HGTE…EGAE), and 994–1011 (SEEK…VLRE). The segment covering 1020-1032 (TQPSQDSGTQGNV) has biased composition (polar residues). The stretch at 1134 to 1416 (NPVRRACHYI…IFVALIIITF (283 aa)) is one III repeat. Residues 1149–1167 (FEMCILLVITMSSIALAAE) form a helical membrane-spanning segment. Residues 1168-1175 (DPVQGDAP) are Extracellular-facing. The helical transmembrane segment at 1176 to 1200 (RNNVLKYLDYVFTGVFTFEMVIKMI) threads the bilayer. Topologically, residues 1201-1214 (NLGLILHPGSYFRD) are cytoplasmic. A helical membrane pass occupies residues 1215–1235 (LWNILDFIVVSGALVAFAFTG). The Extracellular portion of the chain corresponds to 1236-1241 (SRGKDL). The chain crosses the membrane as a helical span at residues 1242–1262 (NTIKSLRVLRVLRPLKTIKRL). The Cytoplasmic portion of the chain corresponds to 1263-1280 (PKLKAVFDCVVNSLKNVL). A helical transmembrane segment spans residues 1281–1300 (NILIVYMLFMFIFAVIAVQL). The Extracellular segment spans residues 1301–1387 (FKGKFFYCTD…DQGPSPSYRM (87 aa)). The chain crosses the membrane as a helical span at residues 1388–1413 (EMSIFYVVYFVVFPFFFVNIFVALII). The Cytoplasmic segment spans residues 1414–1468 (ITFQEQGDKVMSDCSLEKNERACIDFAISAKPLTRYMPQNKQTFQYKMWKFVVSP). The stretch at 1453-1708 (NKQTFQYKMW…LFVAVIMDNF (256 aa)) is one IV repeat. Residues 1469-1487 (PFEYLIMALIALNTIVLMM) form a helical membrane-spanning segment. At 1488-1495 (KFYNAPDP) the chain is on the extracellular side. A helical membrane pass occupies residues 1496 to 1520 (YDRMLQYLNILFTFLFSMECVLKLI). The Cytoplasmic portion of the chain corresponds to 1521-1530 (GFGVLNYFRD). Residues 1531–1552 (AWNVFDFVTVLGSITDILVTEL) traverse the membrane as a helical segment. Residues 1553–1558 (ADSFIN) are Extracellular-facing. A glycan (N-linked (GlcNAc...) asparagine) is linked at Asn-1558. A helical transmembrane segment spans residues 1559-1577 (LSFLRLFRAARLIKLLRQG). Topologically, residues 1578 to 1596 (YTIRILLWTFVQSFKALPY) are cytoplasmic. The chain crosses the membrane as a helical span at residues 1597–1616 (VCLLIAMLFFIYAIIGMQVF). The Extracellular portion of the chain corresponds to 1617–1680 (GNIELDDDGA…IDGDECGSNF (64 aa)). Residues 1681 to 1704 (AYFYFVSFIFFSSFLMLNLFVAVI) form a helical membrane-spanning segment. At 1705-2326 (MDNFEYLTRD…YRETDEDDWC (622 aa)) the chain is on the cytoplasmic side. The EF-hand domain occupies 1721–1756 (HHLDEFIRVWAEYDPGARGRITYNDMYEMLRHMCPP). Asp-1734, Arg-1740, and Asp-1745 together coordinate Ca(2+). Over residues 1897-1912 (EEPSSYSTSHKNSVNP) the composition is skewed to polar residues. Disordered regions lie at residues 1897 to 1916 (EEPS…LYQG), 1932 to 1954 (CAEG…KSSS), 2039 to 2242 (PHHH…SSDP), and 2271 to 2326 (TTAT…DDWC). Residues 1932-1948 (CAEGKKEVPESHPEEAG) show a composition bias toward basic and acidic residues. Basic residues predominate over residues 2039–2055 (PHHHHHHHRCHHRREKK). Basic and acidic residues-rich tracts occupy residues 2056-2069 (QRSL…HADE) and 2077-2104 (QLRD…EKQR). Composition is skewed to polar residues over residues 2142 to 2161 (GSGS…STPS), 2275 to 2289 (GRSP…QPPQ), and 2302 to 2311 (GRSTGPSTAA).

The protein belongs to the calcium channel alpha-1 subunit (TC 1.A.1.11) family. In terms of assembly, multisubunit complex consisting of alpha-1, alpha-2, beta and delta subunits in a 1:1:1:1 ratio. The channel activity is directed by the pore-forming and voltage-sensitive alpha-1 subunit. In many cases, this subunit is sufficient to generate voltage-sensitive calcium channel activity. The auxiliary subunits beta and alpha-2/delta linked by a disulfide bridge regulate the channel activity. Post-translationally, phosphorylated in vitro by CaM-kinase II, PKA, PKC and CGPK. In terms of tissue distribution, expression is higher in the electric lobe than in the forebrain.

Its subcellular location is the membrane. The isoform alpha-1B gives rise to N-type calcium currents. N-type calcium channels belong to the 'high-voltage activated' (HVA) group. The sequence is that of Probable voltage-dependent N-type calcium channel subunit alpha-1B from Diplobatis ommata (Ocellated electric ray).